Reading from the N-terminus, the 70-residue chain is Cold shock-like protein (70 aa).

A CSD domain is found at 5–65; the sequence is GTVKWFSKDK…DTKGPRAKNV (61 aa).

It localises to the cytoplasm. In Aquifex aeolicus (strain VF5), this protein is Cold shock-like protein (csp).